The primary structure comprises 520 residues: Probable glycerol-3-phosphate acyltransferase 3 (520 aa).

5 helical membrane passes run 5–20, 64–84, 88–108, 264–284, and 286–306; these read ISIF…RFIL, YFML…LFIL, ISLM…FFGI, TLMN…AAAA, and LFVS…FSGC. The HXXXXD motif motif lies at 334-339; the sequence is HRTLLD.

Belongs to the GPAT/DAPAT family. Widely expressed at low level. Expressed at higher level in seedlings and leaves.

Its subcellular location is the membrane. The enzyme catalyses sn-glycerol 3-phosphate + an acyl-CoA = a 1-acyl-sn-glycero-3-phosphate + CoA. Its pathway is phospholipid metabolism; CDP-diacylglycerol biosynthesis; CDP-diacylglycerol from sn-glycerol 3-phosphate: step 1/3. Its function is as follows. Esterifies acyl-group from acyl-ACP to the sn-1 position of glycerol-3-phosphate, an essential step in glycerolipid biosynthesis. This Arabidopsis thaliana (Mouse-ear cress) protein is Probable glycerol-3-phosphate acyltransferase 3 (GPAT3).